We begin with the raw amino-acid sequence, 269 residues long: 5'-nucleotidase SurE (269 aa).

A divalent metal cation-binding residues include D11, D12, S43, and N101.

The protein belongs to the SurE nucleotidase family. It depends on a divalent metal cation as a cofactor.

The protein resides in the cytoplasm. The catalysed reaction is a ribonucleoside 5'-phosphate + H2O = a ribonucleoside + phosphate. Nucleotidase that shows phosphatase activity on nucleoside 5'-monophosphates. The chain is 5'-nucleotidase SurE from Prochlorococcus marinus (strain MIT 9515).